Reading from the N-terminus, the 565-residue chain is Formate--tetrahydrofolate ligase (565 aa).

Residue 65–72 (TPAGEGKT) coordinates ATP.

This sequence belongs to the formate--tetrahydrofolate ligase family.

It catalyses the reaction (6S)-5,6,7,8-tetrahydrofolate + formate + ATP = (6R)-10-formyltetrahydrofolate + ADP + phosphate. It functions in the pathway one-carbon metabolism; tetrahydrofolate interconversion. This chain is Formate--tetrahydrofolate ligase, found in Syntrophus aciditrophicus (strain SB).